A 95-amino-acid polypeptide reads, in one-letter code: Acylphosphatase (95 aa).

Positions 7–93 (TWQLFAHGRV…QLFDRFDWLP (87 aa)) constitute an Acylphosphatase-like domain. Catalysis depends on residues R22 and N40.

This sequence belongs to the acylphosphatase family.

The enzyme catalyses an acyl phosphate + H2O = a carboxylate + phosphate + H(+). This Cupriavidus metallidurans (strain ATCC 43123 / DSM 2839 / NBRC 102507 / CH34) (Ralstonia metallidurans) protein is Acylphosphatase (acyP).